The following is a 196-amino-acid chain: Molybdenum cofactor guanylyltransferase (196 aa).

Residues 10 to 12 (LAG), K23, N51, D69, and D99 contribute to the GTP site. D99 provides a ligand contact to Mg(2+).

Belongs to the MobA family. As to quaternary structure, monomer. It depends on Mg(2+) as a cofactor.

It is found in the cytoplasm. It carries out the reaction Mo-molybdopterin + GTP + H(+) = Mo-molybdopterin guanine dinucleotide + diphosphate. Its function is as follows. Transfers a GMP moiety from GTP to Mo-molybdopterin (Mo-MPT) cofactor (Moco or molybdenum cofactor) to form Mo-molybdopterin guanine dinucleotide (Mo-MGD) cofactor. The protein is Molybdenum cofactor guanylyltransferase of Shewanella woodyi (strain ATCC 51908 / MS32).